A 56-amino-acid chain; its full sequence is Small ribosomal subunit protein uS14 (56 aa).

4 residues coordinate Zn(2+): C21, C24, C39, and C42.

It belongs to the universal ribosomal protein uS14 family. Requires Zn(2+) as cofactor.

This Candida glabrata (strain ATCC 2001 / BCRC 20586 / JCM 3761 / NBRC 0622 / NRRL Y-65 / CBS 138) (Yeast) protein is Small ribosomal subunit protein uS14 (RPS29).